We begin with the raw amino-acid sequence, 291 residues long: Glucose and ribitol dehydrogenase (291 aa).

A disordered region spans residues 1–35; it reads MASGGQFPPQKQESQPGKEHLMDPSPQHASPHYKP. 45–69 serves as a coordination point for NAD(+); it reads LVTGGDSGIGRSVCYHFALEGATVA. Serine 183 is a substrate binding site. The active-site Proton acceptor is tyrosine 196.

This sequence belongs to the short-chain dehydrogenases/reductases (SDR) family. In terms of tissue distribution, expressed in embryogenic cells, somatic embryos and seeds in the later stages of development, but not in non-embryogenic cells and mature leaves.

Functionally, may act as a short alcohol-polyol-sugar dehydrogenase possibly related to carbohydrate metabolism and the acquisition of desiccation tolerance. May also be involved in signal transduction. This Daucus carota (Wild carrot) protein is Glucose and ribitol dehydrogenase (CAISE5).